The following is a 436-amino-acid chain: Trigger factor (436 aa).

Positions 161–248 constitute a PPIase FKBP-type domain; sequence TDRVTIDLYG…LKKVEQYRLP (88 aa).

Belongs to the FKBP-type PPIase family. Tig subfamily.

Its subcellular location is the cytoplasm. The catalysed reaction is [protein]-peptidylproline (omega=180) = [protein]-peptidylproline (omega=0). Involved in protein export. Acts as a chaperone by maintaining the newly synthesized protein in an open conformation. Functions as a peptidyl-prolyl cis-trans isomerase. The polypeptide is Trigger factor (Baumannia cicadellinicola subsp. Homalodisca coagulata).